Here is a 239-residue protein sequence, read N- to C-terminus: Uridylate kinase (239 aa).

An ATP-binding site is contributed by 13–16 (KLSG). Residue Gly55 coordinates UMP. 2 residues coordinate ATP: Gly56 and Arg60. UMP contacts are provided by residues Asp75 and 136-143 (TGNPFFTT). Residues Thr163, Tyr169, and Asp172 each contribute to the ATP site.

It belongs to the UMP kinase family. In terms of assembly, homohexamer.

The protein localises to the cytoplasm. It catalyses the reaction UMP + ATP = UDP + ADP. It functions in the pathway pyrimidine metabolism; CTP biosynthesis via de novo pathway; UDP from UMP (UMPK route): step 1/1. Its activity is regulated as follows. Inhibited by UTP. Its function is as follows. Catalyzes the reversible phosphorylation of UMP to UDP. In Chromobacterium violaceum (strain ATCC 12472 / DSM 30191 / JCM 1249 / CCUG 213 / NBRC 12614 / NCIMB 9131 / NCTC 9757 / MK), this protein is Uridylate kinase.